Here is a 258-residue protein sequence, read N- to C-terminus: Imidazole glycerol phosphate synthase subunit HisF (258 aa).

Active-site residues include Asp11 and Asp130.

Belongs to the HisA/HisF family. In terms of assembly, heterodimer of HisH and HisF.

The protein resides in the cytoplasm. It carries out the reaction 5-[(5-phospho-1-deoxy-D-ribulos-1-ylimino)methylamino]-1-(5-phospho-beta-D-ribosyl)imidazole-4-carboxamide + L-glutamine = D-erythro-1-(imidazol-4-yl)glycerol 3-phosphate + 5-amino-1-(5-phospho-beta-D-ribosyl)imidazole-4-carboxamide + L-glutamate + H(+). The protein operates within amino-acid biosynthesis; L-histidine biosynthesis; L-histidine from 5-phospho-alpha-D-ribose 1-diphosphate: step 5/9. IGPS catalyzes the conversion of PRFAR and glutamine to IGP, AICAR and glutamate. The HisF subunit catalyzes the cyclization activity that produces IGP and AICAR from PRFAR using the ammonia provided by the HisH subunit. This Shigella dysenteriae serotype 1 (strain Sd197) protein is Imidazole glycerol phosphate synthase subunit HisF.